Consider the following 75-residue polypeptide: Sec-independent protein translocase protein TatA (75 aa).

The chain crosses the membrane as a helical span at residues 1 to 21 (MFGLSPAQLIILLVVILLIFG).

The protein belongs to the TatA/E family. In terms of assembly, the Tat system comprises two distinct complexes: a TatABC complex, containing multiple copies of TatA, TatB and TatC subunits, and a separate TatA complex, containing only TatA subunits. Substrates initially bind to the TatABC complex, which probably triggers association of the separate TatA complex to form the active translocon.

Its subcellular location is the cell inner membrane. Its function is as follows. Part of the twin-arginine translocation (Tat) system that transports large folded proteins containing a characteristic twin-arginine motif in their signal peptide across membranes. TatA could form the protein-conducting channel of the Tat system. The chain is Sec-independent protein translocase protein TatA from Haemophilus influenzae (strain PittEE).